Reading from the N-terminus, the 220-residue chain is MAIIMAESSYERRVKALYEKQIRMETLEGKFIKKVFKFNSILLDVKEAAARHQRKVEKMQKVVIERREELEKRVSFMGQLAQEVEATKLRNLAMKDRIKQQKMLARERNNEIMERIHTLSKTTGTYVNQEALPARVKGVTVLRGDKRDQLIPFDLNATDAEGLNSLCQHLESLNVDVSQWQQLVSLVMDVTMEARAPTTPPKEAANCKSIIEIDLTSPTS.

Residues 41-119 (ILLDVKEAAA…NEIMERIHTL (79 aa)) adopt a coiled-coil conformation.

The protein belongs to the SPC25 family. As to quaternary structure, component of the Ndc80 complex, which is composed of Ndc80, Nuf2 and Spc25.

Its subcellular location is the nucleus. It localises to the chromosome. The protein localises to the centromere. The protein resides in the kinetochore. Its function is as follows. Acts as a component of the essential kinetochore-associated Ndc80 complex, which is required for chromosome segregation and spindle checkpoint activity during meiosis and mitosis. Required for kinetochore integrity and the organization of stable microtubule binding sites in the outer plate of the kinetochore. Participates in SAC signaling that responds specifically to disruptions in spindle microtubule dynamics. The NDC80 complex synergistically enhances the affinity of the SKA1 complex for microtubules and may allow the NDC80 complex to track depolymerizing microtubules. The chain is Kinetochore protein Spc25 from Drosophila erecta (Fruit fly).